Reading from the N-terminus, the 144-residue chain is 3-dehydroquinate dehydratase (144 aa).

Tyr-22 functions as the Proton acceptor in the catalytic mechanism. Substrate-binding residues include Asn-74, His-80, and Asp-87. His-100 (proton donor) is an active-site residue. Substrate contacts are provided by residues 101 to 102 and Arg-111; that span reads LS.

Belongs to the type-II 3-dehydroquinase family. As to quaternary structure, homododecamer.

It catalyses the reaction 3-dehydroquinate = 3-dehydroshikimate + H2O. The protein operates within metabolic intermediate biosynthesis; chorismate biosynthesis; chorismate from D-erythrose 4-phosphate and phosphoenolpyruvate: step 3/7. Functionally, catalyzes a trans-dehydration via an enolate intermediate. This Clostridium perfringens (strain ATCC 13124 / DSM 756 / JCM 1290 / NCIMB 6125 / NCTC 8237 / Type A) protein is 3-dehydroquinate dehydratase.